We begin with the raw amino-acid sequence, 779 residues long: Lysosome membrane protein 2-A (779 aa).

Residues 1–17 lie on the Cytoplasmic side of the membrane; that stretch reads MVKRGCCHRKMVNHKGC. The chain crosses the membrane as a helical span at residues 18 to 38; the sequence is LVSGIFLAVIGAVLFILAFAL. Residues 39-732 are Lumenal-facing; it reads LPHLINQTTQ…LLNSQFKLIK (694 aa). Asparagine 44, asparagine 86, asparagine 95, asparagine 114, asparagine 117, asparagine 201, asparagine 239, asparagine 262, asparagine 266, asparagine 277, asparagine 369, asparagine 410, asparagine 440, asparagine 508, asparagine 543, asparagine 601, asparagine 619, asparagine 651, and asparagine 693 each carry an N-linked (GlcNAc...) asparagine glycan. The chain crosses the membrane as a helical span at residues 733 to 753; it reads ILGFVPVIVVSIIGGIILIAG. Residues 754–779 lie on the Cytoplasmic side of the membrane; it reads ISMFAFGFKKLRQQKQQGYQAIINNE. The short motif at 771-774 is the Tyrosine-type lysosomal sorting signal element; that stretch reads GYQA.

This sequence belongs to the CD36 family. In terms of processing, heavily glycosylated.

Its subcellular location is the lysosome membrane. In terms of biological role, may act as a lysosomal receptor. May be involved in macropinocytosis and fluid phase exocytosis. Binds to the anionic phospholipid phosphoinositol 4,5-bisphosphate, but not to phosphatidylcholine and only weakly to phosphatidylserine. The polypeptide is Lysosome membrane protein 2-A (lmpA) (Dictyostelium discoideum (Social amoeba)).